Here is a 163-residue protein sequence, read N- to C-terminus: Crossover junction endodeoxyribonuclease RuvC (163 aa).

Active-site residues include D9, E76, and D148. Mg(2+) contacts are provided by D9, E76, and D148.

It belongs to the RuvC family. In terms of assembly, homodimer which binds Holliday junction (HJ) DNA. The HJ becomes 2-fold symmetrical on binding to RuvC with unstacked arms; it has a different conformation from HJ DNA in complex with RuvA. In the full resolvosome a probable DNA-RuvA(4)-RuvB(12)-RuvC(2) complex forms which resolves the HJ. Mg(2+) is required as a cofactor.

Its subcellular location is the cytoplasm. It carries out the reaction Endonucleolytic cleavage at a junction such as a reciprocal single-stranded crossover between two homologous DNA duplexes (Holliday junction).. Its function is as follows. The RuvA-RuvB-RuvC complex processes Holliday junction (HJ) DNA during genetic recombination and DNA repair. Endonuclease that resolves HJ intermediates. Cleaves cruciform DNA by making single-stranded nicks across the HJ at symmetrical positions within the homologous arms, yielding a 5'-phosphate and a 3'-hydroxyl group; requires a central core of homology in the junction. The consensus cleavage sequence is 5'-(A/T)TT(C/G)-3'. Cleavage occurs on the 3'-side of the TT dinucleotide at the point of strand exchange. HJ branch migration catalyzed by RuvA-RuvB allows RuvC to scan DNA until it finds its consensus sequence, where it cleaves and resolves the cruciform DNA. This chain is Crossover junction endodeoxyribonuclease RuvC, found in Trichodesmium erythraeum (strain IMS101).